The following is a 226-amino-acid chain: Ribose-5-phosphate isomerase A (226 aa).

Residues 29–32 (TGST), 84–87 (DGAD), and 97–100 (KGGG) each bind substrate. Residue E106 is the Proton acceptor of the active site. A substrate-binding site is contributed by K124.

Belongs to the ribose 5-phosphate isomerase family. In terms of assembly, homodimer.

The enzyme catalyses aldehydo-D-ribose 5-phosphate = D-ribulose 5-phosphate. It functions in the pathway carbohydrate degradation; pentose phosphate pathway; D-ribose 5-phosphate from D-ribulose 5-phosphate (non-oxidative stage): step 1/1. In terms of biological role, catalyzes the reversible conversion of ribose-5-phosphate to ribulose 5-phosphate. This chain is Ribose-5-phosphate isomerase A, found in Methanothermobacter thermautotrophicus (strain ATCC 29096 / DSM 1053 / JCM 10044 / NBRC 100330 / Delta H) (Methanobacterium thermoautotrophicum).